Reading from the N-terminus, the 865-residue chain is MVASARVQKLVRRYKLAIATALAILLLQGLVVWSFSGLEEDEPGEKGRQRKPRPLDPGEGSKDTDSSAGRRGSAGRRHGRWRGRAESPGMPVAKVVRAVTSRHRASRRVPPAPPPEAPGRQNLSGAAAGEALVGAAGFPPHGDTGSVEGAPQPTDNGFTPKCEIVGKDALSALARASSKQCQQEIANVVCLHQAGNLMPKAVPRHCQLAGKMNPGIQWDEVRAQQPVDGPPVRIAYMLVVHGRAIRQLKRLLKAVYHEQHFFYIHVDKRSNYLHREVVELARQYDNVRVTPWRMVTIWGGASLLRMYLRSMQDLLEVPGWAWDFFINLSATDYPTRTNEELVAFLSKNRDKNFLKSHGRDNSRFIKKQGLDRLFHECDSHMWRLGERQIPAGIVVDGGSDWFVLTRSFVEYVVYTDDPLVAQLRQFYTYTLLPAESFFHTVLENSPACESLVDNNLRVTNWNRRLGCKCQYKHIVDWCGCSPNDFKPQDFLRLQQVSRPTFFARKFESTVNQEVLEILDFHLYGSYPPGTPALKAYWENTYDAADGPGGLSDVMLTAYTAFARLSLRHAATAIPPLATPLCRFEPRGLPSSVHLYFYDDHFQGYLVTQAVQPSAQGPAETLEMWLMPQGSLKLLGRSDQASRLQSLEVGTEWDPKERLFRNFGGLLGPLDEPVAMQRWARGPNLTATVVWIDPTYVVATSYDIAVDADTEVTQYKPPLSRPLRPGAWTVRLLQFWEPLGETRFLVLPLTFNRKLPLRKDDASWLHAGPPHNEYMEQSFQGLSGILNLPQPEPAEEAARRHAELTGPALEAWTDGELSGFWSVAGLCAMGPSACPSLELCRLTSWSSVFPDPKSELGPVKADGRLR.

Residues 1-15 lie on the Cytoplasmic side of the membrane; the sequence is MVASARVQKLVRRYK. The chain crosses the membrane as a helical; Signal-anchor for type II membrane protein span at residues 16–36; sequence LAIATALAILLLQGLVVWSFS. The Lumenal segment spans residues 37-865; that stretch reads GLEEDEPGEK…GPVKADGRLR (829 aa). The interval 39-157 is disordered; sequence EEDEPGEKGR…EGAPQPTDNG (119 aa). The span at 53-65 shows a compositional bias: basic and acidic residues; sequence RPLDPGEGSKDTD. Basic residues predominate over residues 73–82; it reads SAGRRHGRWR. A glycan (N-linked (GlcNAc...) asparagine) is linked at N122. Positions 125 to 137 are enriched in low complexity; the sequence is GAAAGEALVGAAG. 4 disulfide bridges follow: C162/C190, C206/C448, C467/C480, and C469/C478. UDP-alpha-D-xylose contacts are provided by residues V239, D267, and 296–298; that span reads TIW. N327 carries N-linked (GlcNAc...) asparagine glycosylation. A UDP-alpha-D-xylose-binding site is contributed by 400–401; it reads DW. UDP-alpha-D-xylose contacts are provided by residues S481 and 504-505; that span reads RK. 2 disulfides stabilise this stretch: C581/C833 and C826/C839. N-linked (GlcNAc...) asparagine glycosylation is present at N683.

The protein belongs to the glycosyltransferase 14 family. XylT subfamily. As to quaternary structure, monomer. It depends on Mg(2+) as a cofactor. Requires Mn(2+) as cofactor. Post-translationally, contains disulfide bonds.

It localises to the golgi apparatus membrane. The protein resides in the secreted. The enzyme catalyses UDP-alpha-D-xylose + L-seryl-[protein] = 3-O-(beta-D-xylosyl)-L-seryl-[protein] + UDP + H(+). It functions in the pathway glycan metabolism; chondroitin sulfate biosynthesis. The protein operates within glycan metabolism; heparan sulfate biosynthesis. Functionally, catalyzes the first step in the biosynthesis of chondroitin sulfate, heparan sulfate and dermatan sulfate proteoglycans, such as DCN. Transfers D-xylose from UDP-D-xylose to specific serine residues of the core protein. This chain is Xylosyltransferase 2 (XYLT2), found in Canis lupus familiaris (Dog).